Here is a 288-residue protein sequence, read N- to C-terminus: 2-methoxy-6-polyprenyl-1,4-benzoquinol methylase, mitochondrial (288 aa).

3 residues coordinate S-adenosyl-L-methionine: T68, D102, and S146. The span at 260–270 (PITPTTSSDIP) shows a compositional bias: low complexity. Positions 260-288 (PITPTTSSDIPAQNTSEATCEVKPEPNSA) are disordered. Positions 279–288 (CEVKPEPNSA) are enriched in basic and acidic residues.

Belongs to the class I-like SAM-binding methyltransferase superfamily. MenG/UbiE family. Component of a multi-subunit COQ enzyme complex.

Its subcellular location is the mitochondrion inner membrane. The enzyme catalyses a 2-methoxy-6-(all-trans-polyprenyl)benzene-1,4-diol + S-adenosyl-L-methionine = a 5-methoxy-2-methyl-3-(all-trans-polyprenyl)benzene-1,4-diol + S-adenosyl-L-homocysteine + H(+). The protein operates within cofactor biosynthesis; ubiquinone biosynthesis. Its function is as follows. Methyltransferase required for the conversion of 2-polyprenyl-6-methoxy-1,4-benzoquinol (DDMQH2) to 2-polyprenyl-3-methyl-6-methoxy-1,4-benzoquinol (DMQH2). This chain is 2-methoxy-6-polyprenyl-1,4-benzoquinol methylase, mitochondrial, found in Leishmania donovani.